Here is a 444-residue protein sequence, read N- to C-terminus: Glutamate--tRNA ligase 2 (444 aa).

The short motif at 8-18 (PSPTGHLHAGN) is the 'HIGH' region element. A 'KMSKS' region motif is present at residues 241–245 (KLSKR). Position 244 (Lys-244) interacts with ATP.

This sequence belongs to the class-I aminoacyl-tRNA synthetase family. Glutamate--tRNA ligase type 1 subfamily. In terms of assembly, monomer.

Its subcellular location is the cytoplasm. The catalysed reaction is tRNA(Glu) + L-glutamate + ATP = L-glutamyl-tRNA(Glu) + AMP + diphosphate. Catalyzes the attachment of glutamate to tRNA(Glu) in a two-step reaction: glutamate is first activated by ATP to form Glu-AMP and then transferred to the acceptor end of tRNA(Glu). The polypeptide is Glutamate--tRNA ligase 2 (Acidiphilium cryptum (strain JF-5)).